Here is a 388-residue protein sequence, read N- to C-terminus: GTPase Obg (388 aa).

Residues 1–159 (MKFVDEAVIR…RSLKLELLLL (159 aa)) form the Obg domain. The OBG-type G domain maps to 160–333 (ADVGLLGMPN…LALKLLDYIA (174 aa)). GTP is bound by residues 166-173 (GMPNAGKS), 191-195 (FTTLV), 213-216 (DIPG), 283-286 (NKTD), and 314-316 (SAY). 2 residues coordinate Mg(2+): S173 and T193.

This sequence belongs to the TRAFAC class OBG-HflX-like GTPase superfamily. OBG GTPase family. As to quaternary structure, monomer. Mg(2+) is required as a cofactor.

Its subcellular location is the cytoplasm. Functionally, an essential GTPase which binds GTP, GDP and possibly (p)ppGpp with moderate affinity, with high nucleotide exchange rates and a fairly low GTP hydrolysis rate. Plays a role in control of the cell cycle, stress response, ribosome biogenesis and in those bacteria that undergo differentiation, in morphogenesis control. In Shewanella putrefaciens (strain CN-32 / ATCC BAA-453), this protein is GTPase Obg.